The primary structure comprises 68 residues: Large ribosomal subunit protein bL35 (68 aa).

This sequence belongs to the bacterial ribosomal protein bL35 family.

In Wolbachia pipientis wMel, this protein is Large ribosomal subunit protein bL35.